The primary structure comprises 99 residues: Large ribosomal subunit protein uL23 (99 aa).

It belongs to the universal ribosomal protein uL23 family. As to quaternary structure, part of the 50S ribosomal subunit. Contacts protein L29, and trigger factor when it is bound to the ribosome.

Its function is as follows. One of the early assembly proteins it binds 23S rRNA. One of the proteins that surrounds the polypeptide exit tunnel on the outside of the ribosome. Forms the main docking site for trigger factor binding to the ribosome. In Stenotrophomonas maltophilia (strain R551-3), this protein is Large ribosomal subunit protein uL23.